A 1977-amino-acid chain; its full sequence is Echinoderm microtubule-associated protein-like 5 (1977 aa).

WD repeat units lie at residues 59–100, 104–145, 148–187, 195–233, 235–273, 280–321, 323–362, 406–445, 449–488, and 561–601; these read GHSD…TVSV, VHTH…MLSM, GHTD…LTPK, GDLQ…RTIQ, AHTA…TVID, GYKG…LIMQ, HCEG…LIAR, DRKE…KKVG, GSLS…EVTS, and GHSA…KLKD. A disordered region spans residues 609–629; sequence ESLAESNSDESDSDLSDVPEL. Over residues 615 to 629 the composition is skewed to acidic residues; the sequence is NSDESDSDLSDVPEL. WD repeat units lie at residues 725-766, 770-811, 814-853, 861-900, 901-940, 996-1035, 1038-1077, 1080-1120, and 1236-1276; these read GHDD…PLSI, YHQY…KLSV, GSKD…LIGK, GKND…KTVK, AHDG…KTYA, HMEG…CMLA, KLKK…DLVS, HRKD…RVGV, and AHST…HREK. Disordered stretches follow at residues 1276-1297 and 1323-1363; these read KKYC…YDSD and PHLQ…NVGK. Acidic residues predominate over residues 1281 to 1294; the sequence is SEESDIDSEEDGGY. Over residues 1326-1337 the composition is skewed to basic and acidic residues; it reads QQKEPSVDERQG. WD repeat units lie at residues 1420-1471, 1475-1516, 1519-1558, 1568-1606, 1608-1654, 1699-1739, 1741-1782, 1783-1822, 1895-1934, and 1940-1977; these read EHND…TLSI, SHSK…KIAS, GHNQ…LLSK, ARMQ…RVVA, AHNG…RAFR, GHVD…MLNK, NLGH…GKKR, DRRC…TLNR, AEKA…KFAK, and GHSP…HMPH.

Belongs to the WD repeat EMAP family.

The protein localises to the cytoplasm. The protein resides in the cytoskeleton. In terms of biological role, may modify the assembly dynamics of microtubules, such that microtubules are slightly longer, but more dynamic. The protein is Echinoderm microtubule-associated protein-like 5 (Eml5) of Mus musculus (Mouse).